Consider the following 97-residue polypeptide: uncharacterized protein (97 aa).

This is an uncharacterized protein from Caenorhabditis elegans.